The chain runs to 144 residues: Large ribosomal subunit protein uL16 (144 aa).

Basic residues predominate over residues 1–19 (MLLPKRVKYRRQHRPKTTG). The tract at residues 1–23 (MLLPKRVKYRRQHRPKTTGRSKG) is disordered.

Belongs to the universal ribosomal protein uL16 family. In terms of assembly, part of the 50S ribosomal subunit.

In terms of biological role, binds 23S rRNA and is also seen to make contacts with the A and possibly P site tRNAs. The polypeptide is Large ribosomal subunit protein uL16 (Staphylococcus carnosus (strain TM300)).